The chain runs to 98 residues: Venom toxin OcyC11 (98 aa).

Positions 1 to 20 are cleaved as a signal peptide; it reads MKIACTLVLFVMLRCYVNAR.

Contains 4 disulfide bonds. As to expression, expressed by the venom gland.

Its subcellular location is the secreted. This Opisthacanthus cayaporum (South American scorpion) protein is Venom toxin OcyC11.